The chain runs to 257 residues: MGRVIRGQRKGAGSVFKAHVKHRKGAAKLRAIDFAERNGYIKGIVKDIIHDPGRGAPLAKVAFRDPYRFKKRTELFVAAEGIHTGQFVYCGKKAQLNIGNVLPVGTMPEGTIVCCVEEKPGDRGKLARASGNYATVISHNPETKKTRVKLPSGSKKVISSANRAIVGVVAGGGRIDKPILKAGRAYHKYKAKRNCWPRVRGVAMNPVEHPFGGGNHQHIGKPSTIRRDAPAGRKVGLIAARRTGRLRGTKTVQEKEN.

The tract at residues 207 to 231 (VEHPFGGGNHQHIGKPSTIRRDAPA) is disordered.

The protein belongs to the universal ribosomal protein uL2 family. In terms of assembly, component of the large ribosomal subunit.

It is found in the cytoplasm. In terms of biological role, component of the large ribosomal subunit. The ribosome is a large ribonucleoprotein complex responsible for the synthesis of proteins in the cell. This chain is Large ribosomal subunit protein uL2 (rpl8), found in Xenopus laevis (African clawed frog).